The following is a 289-amino-acid chain: ATP phosphoribosyltransferase (289 aa).

It belongs to the ATP phosphoribosyltransferase family. Long subfamily. Mg(2+) is required as a cofactor.

It is found in the cytoplasm. The enzyme catalyses 1-(5-phospho-beta-D-ribosyl)-ATP + diphosphate = 5-phospho-alpha-D-ribose 1-diphosphate + ATP. Its pathway is amino-acid biosynthesis; L-histidine biosynthesis; L-histidine from 5-phospho-alpha-D-ribose 1-diphosphate: step 1/9. Feedback inhibited by histidine. In terms of biological role, catalyzes the condensation of ATP and 5-phosphoribose 1-diphosphate to form N'-(5'-phosphoribosyl)-ATP (PR-ATP). Has a crucial role in the pathway because the rate of histidine biosynthesis seems to be controlled primarily by regulation of HisG enzymatic activity. This chain is ATP phosphoribosyltransferase, found in Solibacter usitatus (strain Ellin6076).